We begin with the raw amino-acid sequence, 128 residues long: Ig kappa chain V-V region T1 (128 aa).

An N-terminal signal peptide occupies residues 1–20 (MRTPAQFLGILLLWFPGIKC). Residues 21–43 (DIKMTQSPSSMYASLGERVTISC) form a framework-1 region. Cysteine 43 and cysteine 108 are oxidised to a cystine. The tract at residues 44 to 54 (KASQDINSYLT) is complementarity-determining-1. A framework-2 region spans residues 55-69 (WFQQKPGKSPKTLLY). The interval 70 to 76 (RANRLVD) is complementarity-determining-2. The framework-3 stretch occupies residues 77–108 (GVPSRFSGSGSGQDFSLTISSLEYEDMGIYYC). A complementarity-determining-3 region spans residues 109-117 (LQYDEFPLT). Positions 118 to 127 (FGAGTKLELK) are framework-4.

This chain is Ig kappa chain V-V region T1, found in Mus musculus (Mouse).